Consider the following 123-residue polypeptide: Probable prefoldin subunit 4 (123 aa).

Belongs to the prefoldin subunit beta family. As to quaternary structure, heterohexamer of two PFD-alpha type and four PFD-beta type subunits.

Its function is as follows. Binds specifically to cytosolic chaperonin (c-CPN) and transfers target proteins to it. Binds to nascent polypeptide chain and promotes folding in an environment in which there are many competing pathways for nonnative proteins. The polypeptide is Probable prefoldin subunit 4 (Schizosaccharomyces pombe (strain 972 / ATCC 24843) (Fission yeast)).